We begin with the raw amino-acid sequence, 259 residues long: L-ornithine N(alpha)-acyltransferase (259 aa).

It belongs to the acetyltransferase family. OlsB subfamily.

The enzyme catalyses a (3R)-hydroxyacyl-[ACP] + L-ornithine = a lyso-ornithine lipid + holo-[ACP] + H(+). It participates in lipid metabolism. In terms of biological role, catalyzes the first step in the biosynthesis of ornithine lipids, which are phosphorus-free membrane lipids. Catalyzes the 3-hydroxyacyl-acyl carrier protein-dependent acylation of ornithine to form lyso-ornithine lipid (LOL). The polypeptide is L-ornithine N(alpha)-acyltransferase (Rhodobacter capsulatus (strain ATCC BAA-309 / NBRC 16581 / SB1003)).